The following is a 93-amino-acid chain: Large ribosomal subunit protein uL23 (93 aa).

It belongs to the universal ribosomal protein uL23 family. Part of the 50S ribosomal subunit. Contacts protein L29, and trigger factor when it is bound to the ribosome.

In terms of biological role, one of the early assembly proteins it binds 23S rRNA. One of the proteins that surrounds the polypeptide exit tunnel on the outside of the ribosome. Forms the main docking site for trigger factor binding to the ribosome. The chain is Large ribosomal subunit protein uL23 from Helicobacter acinonychis (strain Sheeba).